A 399-amino-acid chain; its full sequence is Alpha-ketoglutarate-dependent dioxygenase fc-dox (399 aa).

Fe cation-binding residues include histidine 158 and aspartate 160. Threonine 203 is a 2-oxoglutarate binding site. Histidine 355 is a Fe cation binding site. Position 367 (arginine 367) interacts with 2-oxoglutarate. A disordered region spans residues 371 to 399 (QGWLAGDRPPKGPVPIPDPRARSSIYYQK).

This sequence belongs to the TfdA dioxygenase family. Fe(2+) serves as cofactor.

It functions in the pathway mycotoxin biosynthesis. In terms of biological role, alpha-ketoglutarate-dependent dioxygenase; part of the 2 gene clusters that mediate the biosynthesis of fusicoccins, diterpene glucosides that display phytohormone-like activity and function as potent activators of plasma membrane H(+)-ATPases in plants by modifying 14-3-3 proteins and cause the plant disease constriction canker. The first step in the pathway is performed by the fusicoccadiene synthase PaFS that possesses both prenyl transferase and terpene cyclase activity, converting isopentenyl diphosphate and dimethylallyl diphosphate into geranylgeranyl diphosphate (GGDP) and successively converting GGDP into fusicocca-2,10(14)-diene, a precursor for fusicoccin H. The second step is the oxidation at the C-8 position by the cytochrome P450 monooxygenase PaP450-2 to yield fusicocca-2,10(14)-diene-8-beta-ol. The cytochrome P450 monooxygenase PaP450-1 then catalyzes the hydroxylation at the C-16 position to produce fusicocca-2,10(14)-diene-8-beta,16-diol. The dioxygenase fc-dox then catalyzes the 16-oxydation of fusicocca-2,10(14)-diene-8-beta,16-diol to yield an aldehyde (8-beta-hydroxyfusicocca-1,10(14)-dien-16-al). The short-chain dehydrogenase/reductase fc-sdr catalyzes the reduction of the aldehyde to yield fusicocca-1,10(14)-diene-8-beta,16-diol. The next step is the hydroxylation at C-9 performed by the cytochrome P450 monooxygenase PaP450-3 that leads to fusicoccin H aglycon which is glycosylated to fusicoccin H by the O-glycosyltransferase PaGT. Hydroxylation at C-12 by the cytochrome P450 monooxygenase PaP450-4 leads then to the production of fusicoccin Q and is followed by methylation by the O-methyltransferase PaMT to yield fusicoccin P. Fusicoccin P is further converted to fusicoccin J via prenylation by the O-glucose prenyltransferase PaPT. Cytochrome P450 monooxygenase PaP450-5 then performs hydroxylation at C-19 to yield dideacetyl-fusicoccin A which is acetylated to 3'-O-deacetyl-fusicoccin A by the O-acetyltransferase PaAT-2. Finally, a another acetylation by the O-acetyltransferase PaAT-1 yields fusicoccin A. In Phomopsis amygdali (Fusicoccum amygdali), this protein is Alpha-ketoglutarate-dependent dioxygenase fc-dox.